The following is a 292-amino-acid chain: AhcY transcriptional activator HvrB (292 aa).

The region spanning 10–67 is the HTH lysR-type domain; the sequence is PPLTALRAFAATASEGGFSAAARKLNVTHAAIAQQVRALEADLDVPLVWRDGKHLHLT. Positions 27 to 46 form a DNA-binding region, H-T-H motif; that stretch reads FSAAARKLNVTHAAIAQQVR.

Belongs to the LysR transcriptional regulatory family.

Functionally, functions as a low-light activator of ahcY expression (gene for S-adenosyl-L-homocysteine hydrolase) and as a high-light activator of an uncharacterized 21.6 kDa protein in the ahcY-hvrB intergenic region (orf5). It is also a negative regulator of its own expression. This chain is AhcY transcriptional activator HvrB (hvrB), found in Rhodobacter capsulatus (strain ATCC BAA-309 / NBRC 16581 / SB1003).